The sequence spans 127 residues: Fatty acid binding protein 1-A, liver (127 aa).

The protein belongs to the calycin superfamily. Fatty-acid binding protein (FABP) family. As to expression, in adults, weakly expressed in the intestine.

The protein resides in the cytoplasm. In terms of biological role, binds free fatty acids and their coenzyme A derivatives, bilirubin, and some other small molecules in the cytoplasm. May be involved in intracellular lipid transport. This is Fatty acid binding protein 1-A, liver from Danio rerio (Zebrafish).